The following is a 954-amino-acid chain: Glycine dehydrogenase (decarboxylating) (954 aa).

The residue at position 704 (lysine 704) is an N6-(pyridoxal phosphate)lysine.

It belongs to the GcvP family. The glycine cleavage system is composed of four proteins: P, T, L and H. Requires pyridoxal 5'-phosphate as cofactor.

It catalyses the reaction N(6)-[(R)-lipoyl]-L-lysyl-[glycine-cleavage complex H protein] + glycine + H(+) = N(6)-[(R)-S(8)-aminomethyldihydrolipoyl]-L-lysyl-[glycine-cleavage complex H protein] + CO2. Functionally, the glycine cleavage system catalyzes the degradation of glycine. The P protein binds the alpha-amino group of glycine through its pyridoxal phosphate cofactor; CO(2) is released and the remaining methylamine moiety is then transferred to the lipoamide cofactor of the H protein. The protein is Glycine dehydrogenase (decarboxylating) of Rhizobium johnstonii (strain DSM 114642 / LMG 32736 / 3841) (Rhizobium leguminosarum bv. viciae).